A 66-amino-acid chain; its full sequence is DNA-binding protein 7d (66 aa).

N6-methyllysine; partial is present on residues Lys5 and Lys7.

It belongs to the 7 kDa DNA-binding/endoribonuclease P2 family. Monomer. Post-translationally, lys-5 was 70% monomethylated in form 7a, 25% in form 7b, and 20% in form 7d. Lys-7 was 50% monomethylated in form 7a, 40% in form 7b, and 50% in form 7d.

It localises to the cytoplasm. Functionally, can constrain negative DNA supercoils. May be involved in maintaining the integrity of the genome at high temperature. This is DNA-binding protein 7d from Sulfolobus acidocaldarius (strain ATCC 33909 / DSM 639 / JCM 8929 / NBRC 15157 / NCIMB 11770).